A 397-amino-acid polypeptide reads, in one-letter code: Acetate kinase (397 aa).

Position 8 (N8) interacts with Mg(2+). An ATP-binding site is contributed by K15. R89 contacts substrate. D146 (proton donor/acceptor) is an active-site residue. Residues 206-210 (HLGNG), 281-283 (DLR), and 329-333 (GIGEN) contribute to the ATP site. E382 serves as a coordination point for Mg(2+).

It belongs to the acetokinase family. In terms of assembly, homodimer. Requires Mg(2+) as cofactor. Mn(2+) is required as a cofactor.

It localises to the cytoplasm. The catalysed reaction is acetate + ATP = acetyl phosphate + ADP. It participates in metabolic intermediate biosynthesis; acetyl-CoA biosynthesis; acetyl-CoA from acetate: step 1/2. Its function is as follows. Catalyzes the formation of acetyl phosphate from acetate and ATP. Can also catalyze the reverse reaction. The chain is Acetate kinase from Anoxybacillus flavithermus (strain DSM 21510 / WK1).